A 493-amino-acid polypeptide reads, in one-letter code: UPF0699 transmembrane protein YdbT (493 aa).

Transmembrane regions (helical) follow at residues 18–38 (CHTI…VYIV), 46–66 (FYGA…SIIK), 188–208 (LMAA…FALI), 232–252 (IGIY…FSIA), 370–390 (VIFS…WGYL), and 393–413 (ILLP…AWTI).

The protein belongs to the UPF0699 family.

Its subcellular location is the cell membrane. In Bacillus subtilis (strain 168), this protein is UPF0699 transmembrane protein YdbT (ydbT).